A 1010-amino-acid chain; its full sequence is Phosphoenolpyruvate carboxylase (1010 aa).

Polar residues predominate over residues 1–18; that stretch reads MIMRSPETSGASMPQSTA. Disordered stretches follow at residues 1–36 and 132–154; these read MIMRSPETSGASMPQSTAHVPDGEQPRASGGSPGAG and LRPSRSQDDETAAPFDPFAPPLA. Catalysis depends on residues histidine 195 and lysine 652. The segment at 967–986 is disordered; it reads QNRQPPMSESPGTPEDRRTY.

Belongs to the PEPCase type 1 family. It depends on Mg(2+) as a cofactor.

It catalyses the reaction oxaloacetate + phosphate = phosphoenolpyruvate + hydrogencarbonate. Functionally, forms oxaloacetate, a four-carbon dicarboxylic acid source for the tricarboxylic acid cycle. In Parasynechococcus marenigrum (strain WH8102), this protein is Phosphoenolpyruvate carboxylase.